Consider the following 134-residue polypeptide: MTIRPAYRPKIIKKRTKHFIRHQSDRYAKLSHKWRKPKGIDNRVRRRFKGQYLMPNIGYGSNKRTRHMLPTGFKKFLVHNVRELEVLLMQNRVYCGEIAHAVSSKKRKEIVERAKQLSIRLTNPNGRLRSQENE.

Belongs to the eukaryotic ribosomal protein eL32 family.

The chain is Large ribosomal subunit protein eL32 (RpL32) from Drosophila affinis (Fruit fly).